Reading from the N-terminus, the 221-residue chain is Spore wall protein 3 (221 aa).

The first 20 residues, 1 to 20, serve as a signal peptide directing secretion; it reads MVRRSLYFLAVMGVVRSSSG. The tract at residues 150-203 is disordered; it reads ENPASTGSSSTSTCPPKGTAGTTDNKGKAGGAAADDKSKSSSSSSSKKKKKGAK. Residues 154-173 are compositionally biased toward low complexity; the sequence is STGSSSTSTCPPKGTAGTTD. The GPI-anchor amidated serine moiety is linked to residue S192. The propeptide at 193–221 is removed in mature form; it reads SSSKKKKKGAKSLVALGAVATTALFSIVM.

It localises to the spore wall. The protein localises to the membrane. Its subcellular location is the cytoplasm. Functionally, spore wall component. This chain is Spore wall protein 3 (SWP3), found in Encephalitozoon cuniculi (strain GB-M1) (Microsporidian parasite).